We begin with the raw amino-acid sequence, 197 residues long: Heart- and neural crest derivatives-expressed protein 1 (197 aa).

Disordered regions lie at residues 61–94 (VVGPSQTSGRIENLGGKLGRRKGAPPKKERRRTE) and 155–184 (VDGKRRREPQPTEGYWGAAPAGEKKLKGRT). Over residues 78–90 (LGRRKGAPPKKER) the composition is skewed to basic residues. Positions 80–132 (RRKGAPPKKERRRTESINSAFAELRECIPNVPADTKLSKIKTLRLATSYIGYL) constitute a bHLH domain.

In terms of assembly, efficient DNA binding requires dimerization with another bHLH protein. In terms of tissue distribution, highly expressed in the adult heart and expressed at lower levels in the intestine and gall bladder.

It localises to the nucleus. The protein localises to the nucleolus. Plays an essential role in cardiac morphogenesis. This chain is Heart- and neural crest derivatives-expressed protein 1 (hand1), found in Xenopus laevis (African clawed frog).